The following is an 802-amino-acid chain: Neuronal PAS domain-containing protein 4 (802 aa).

A basic motif; degenerate region spans residues 1 to 13 (MYRSTKGASKARR). Residues 1-53 (MYRSTKGASKARRDQINAEIRNLKELLPLAEADKVRLSYLHIMSLACIYTRKG) form the bHLH domain. Residues 5–38 (TKGASKARRDQINAEIRNLKELLPLAEADKVRLS) are a coiled coil. Residues 14–53 (DQINAEIRNLKELLPLAEADKVRLSYLHIMSLACIYTRKG) are helix-loop-helix motif. PAS domains lie at 70–144 (SAQE…LDTD) and 203–273 (PGPG…LAES). The PAC domain maps to 278–317 (AEMVVRLQAKTGGWAWIYCLLYSEGPEGPITANNYPISDM). Composition is skewed to polar residues over residues 466-476 (FSDQLTPSSAT), 506-518 (STFP…STAT), and 532-555 (TPPS…QLSP). Disordered regions lie at residues 466 to 485 (FSDQ…TSPL) and 506 to 555 (STFP…QLSP). Residues 624-648 (YSEKEQNEIDRLIQQISQLAQGMDR) are a coiled coil. The segment at 717-749 (LSTPDPSEEWGSGDPEAEGPGGAPSPCNNLSPE) is disordered.

In terms of assembly, efficient DNA binding requires dimerization with another bHLH protein. Heterodimer; forms a heterodimer with ARNT, ARNT2 or BMAL1. Ubiquitinated, leading to degradation by the proteosome. Brain.

The protein resides in the nucleus. Transcription factor expressed in neurons of the brain that regulates the excitatory-inhibitory balance within neural circuits and is required for contextual memory in the hippocampus. Plays a key role in the structural and functional plasticity of neurons. Acts as an early-response transcription factor in both excitatory and inhibitory neurons, where it induces distinct but overlapping sets of late-response genes in these two types of neurons, allowing the synapses that form on inhibitory and excitatory neurons to be modified by neuronal activity in a manner specific to their function within a circuit, thereby facilitating appropriate circuit responses to sensory experience. In excitatory neurons, activates transcription of BDNF, which in turn controls the number of GABA-releasing synapses that form on excitatory neurons, thereby promoting an increased number of inhibitory synapses on excitatory neurons. In inhibitory neurons, regulates a distinct set of target genes that serve to increase excitatory input onto somatostatin neurons, probably resulting in enhanced feedback inhibition within cortical circuits. The excitatory and inhibitory balance in neurons affects a number of processes, such as short-term and long-term memory, acquisition of experience, fear memory, response to stress and social behavior. Acts as a regulator of dendritic spine development in olfactory bulb granule cells in a sensory-experience-dependent manner by regulating expression of MDM2. Efficient DNA binding requires dimerization with another bHLH protein, such as ARNT, ARNT2 or BMAL1. Can activate the CME (CNS midline enhancer) element. This Homo sapiens (Human) protein is Neuronal PAS domain-containing protein 4.